Reading from the N-terminus, the 695-residue chain is uncharacterized protein (695 aa).

At Ser113 the chain carries Phosphoserine. Transmembrane regions (helical) follow at residues 237 to 257, 265 to 285, 313 to 333, 344 to 364, 380 to 400, 408 to 428, 457 to 477, 488 to 508, 531 to 551, 565 to 585, 604 to 624, and 633 to 653; these read FPLI…SLTV, LAAV…FEGI, IAFS…SEPL, INLT…YIFF, GIYV…TLVW, FIGA…LLLF, AFSG…LTLF, AQSA…AIGI, QVGL…LVFG, VIKL…FDSL, IVNL…LSWF, and WIGI…YVLF. Positions 673-688 are enriched in acidic residues; the sequence is EVDSDEYLTDSDDPDE. Residues 673–695 are disordered; sequence EVDSDEYLTDSDDPDENTALLGA.

This sequence belongs to the multi antimicrobial extrusion (MATE) (TC 2.A.66.1) family.

Its subcellular location is the membrane. This is an uncharacterized protein from Saccharomyces cerevisiae (strain ATCC 204508 / S288c) (Baker's yeast).